Consider the following 92-residue polypeptide: Toxin RelE3 (92 aa).

This sequence belongs to the RelE toxin family.

Functionally, toxic component of a type II toxin-antitoxin (TA) system. Its toxic effect is neutralized by coexpression with cognate antitoxin RelB3 but no other ParD or RelB antitoxin. This is Toxin RelE3 (relE3) from Caulobacter vibrioides (strain ATCC 19089 / CIP 103742 / CB 15) (Caulobacter crescentus).